A 391-amino-acid polypeptide reads, in one-letter code: Heme A synthase (391 aa).

8 helical membrane passes run 37-57, 121-141, 152-172, 186-206, 229-249, 298-318, 332-352, and 354-374; these read IRLWLMALFLLVMAMIVVGGL, RQLGRVIGLVWAVGFLGFLAA, LLALGALGGLQGGIGWWMVAS, LATHLGLAFIILGLIAWQALL, TTVLIGVAFLQIVLGALVAGI, FLHRMAGYALAALGLIFWIFG, LLAMALLAQILLGVGTVLSAA, and WQVAIAHQVGAVVIWVLILHA. Residue H300 coordinates heme. Residue H360 coordinates heme.

It belongs to the COX15/CtaA family. Type 2 subfamily. As to quaternary structure, interacts with CtaB. The cofactor is heme b.

Its subcellular location is the cell membrane. The catalysed reaction is Fe(II)-heme o + 2 A + H2O = Fe(II)-heme a + 2 AH2. The protein operates within porphyrin-containing compound metabolism; heme A biosynthesis; heme A from heme O: step 1/1. In terms of biological role, catalyzes the conversion of heme O to heme A by two successive hydroxylations of the methyl group at C8. The first hydroxylation forms heme I, the second hydroxylation results in an unstable dihydroxymethyl group, which spontaneously dehydrates, resulting in the formyl group of heme A. This is Heme A synthase from Cereibacter sphaeroides (strain KD131 / KCTC 12085) (Rhodobacter sphaeroides).